The chain runs to 299 residues: Protease HtpX homolog (299 aa).

A run of 2 helical transmembrane segments spans residues 14–34 and 39–59; these read WLLLLVFFLLLGLVGYGVGNL and GFGGLILALVIGFIYVVTMIF. His143 serves as a coordination point for Zn(2+). Residue Glu144 is part of the active site. Residue His147 coordinates Zn(2+). 2 consecutive transmembrane segments (helical) span residues 153 to 173 and 198 to 218; these read IRISTIAVALASAITMLAGMA and IVFLILSLIAIILAPLAATLV. Glu227 contacts Zn(2+).

This sequence belongs to the peptidase M48B family. Zn(2+) is required as a cofactor.

It is found in the cell membrane. In Streptococcus thermophilus (strain ATCC BAA-250 / LMG 18311), this protein is Protease HtpX homolog.